The primary structure comprises 324 residues: Probable UDP-sugar transporter protein SLC35A4 (324 aa).

Residues 1–18 are Cytoplasmic-facing; sequence MSVEDGGVPGLGRPRKAR. A helical membrane pass occupies residues 19-39; that stretch reads WTLMLLLSTAMYGAHAPLLAL. Topologically, residues 40–52 are lumenal; sequence CHVDGRVPFRPSS. Residues 53–73 traverse the membrane as a helical segment; the sequence is AVLLTELTKLLLCALSLLVGW. The Cytoplasmic segment spans residues 74-85; sequence QAWPQGTPPWRQ. The chain crosses the membrane as a helical span at residues 86-106; sequence AAPFALSALLYGANNNLVIYL. Topologically, residues 107–141 are lumenal; that stretch reads QRYMDPSTYQVLSNLKIGSTALFYCLCLRHRLSAR. The chain crosses the membrane as a helical span at residues 142-162; that stretch reads QGLALLLLMAAGACYAAGGLQ. The Cytoplasmic segment spans residues 163–180; that stretch reads DPGTTLPGPPSAAATSPM. A helical membrane pass occupies residues 181–201; sequence PLHITPLGLLLLILYCLISGL. Over 202–214 the chain is Lumenal; that stretch reads SSVYTELLMKRQR. Residues 215-235 traverse the membrane as a helical segment; it reads LPLALQNLFLYSFGVLLNLGL. The Cytoplasmic portion of the chain corresponds to 236-248; sequence HAGGGPGPGLLEG. Residues 249–271 traverse the membrane as a helical segment; sequence FSGWMALVVLSQALNGLLMSAVM. Residues 272-275 are Lumenal-facing; the sequence is KHGS. Residues 276 to 298 traverse the membrane as a helical segment; sequence SITRLFVVSCSLVVNAVLSAALL. Over 299–324 the chain is Cytoplasmic; it reads RLQLTAAFFLATLLIGLAVRLYYGSR.

Belongs to the nucleotide-sugar transporter family. SLC35A subfamily. Found in a complex with SLC35A2 and SLC35A3.

Its subcellular location is the golgi apparatus membrane. It catalyses the reaction CDP-L-ribitol(in) + CDP(out) = CDP-L-ribitol(out) + CDP(in). Functionally, mediates the transport of CDP-ribitol. Does not exhibit CMP-sialic acid, UDP-galactose and UDP-N-acetylglucosamine transport activity. In Bos taurus (Bovine), this protein is Probable UDP-sugar transporter protein SLC35A4.